The primary structure comprises 807 residues: Potassium transporter 9 (807 aa).

Residues 1–59 (MAERVEASSVPEGENTIEEREVGAMWELEQKLDQPMDEEANKLNNMYREKGLSMLMLLR) are Cytoplasmic-facing. A helical transmembrane segment spans residues 60-80 (LSFQSLGIVYGDLGTSPLYVF). Residues 81 to 96 (YNTFPDGIDDSEDVIG) are Extracellular-facing. A helical transmembrane segment spans residues 97-117 (ALSLIIYSLLLIPLIKYVFIV). Over 118 to 185 (CKANDNGQGG…EGKEWRKRAL (68 aa)) the chain is Cytoplasmic. The chain crosses the membrane as a helical span at residues 186–206 (LVVVLLGTCMMIGDGILTPAI). The Extracellular segment spans residues 207–225 (SVLSATGGIKVNNPKMSGD). Residues 226–246 (IVVLVAIVILIGLFSMQHYGT) traverse the membrane as a helical segment. Over 247 to 248 (DK) the chain is Cytoplasmic. A helical membrane pass occupies residues 249–269 (VGWLFAPIVLIWFLFIGATGM). Over 270-299 (YNICKYDTSVLKAFSPTYIYLYFKRRGRDG) the chain is Extracellular. The helical transmembrane segment at 300–320 (WISLGGILLSITGTEALYADI) threads the bilayer. Residues 321–322 (AY) lie on the Cytoplasmic side of the membrane. A helical membrane pass occupies residues 323–343 (FPLLAIQLAFTFFVFPCLLLA). At 344-369 (YCGQAAYLVIHKEHYQDAFYASIPDS) the chain is on the extracellular side. Residues 370–390 (VYWPMFIVATGAAIVGSQATI) form a helical membrane-spanning segment. Residues 391–417 (SGTYSIVKQAVAHGCFPRVKIVHTSKK) are Cytoplasmic-facing. A helical membrane pass occupies residues 418–438 (FLGQIYCPDINWILMLGCIAV). Residues 439–454 (TASFKKQSQIGNAYGT) lie on the Extracellular side of the membrane. A helical membrane pass occupies residues 455 to 475 (AVVLVMLVTTLLMVLIMLLVW). Residues 476–481 (HCHWIL) lie on the Cytoplasmic side of the membrane. Residues 482 to 502 (VLIFTFLSFFVELSYFSAVIF) form a helical membrane-spanning segment. Residues 503–507 (KIDEG) are Extracellular-facing. Residues 508–528 (GWVPLIIAAISLLVMSVWHYA) traverse the membrane as a helical segment. Over 529 to 807 (TVKKYEFEMH…LLNVGQVFYV (279 aa)) the chain is Cytoplasmic.

It belongs to the HAK/KUP transporter (TC 2.A.72.3) family.

The protein resides in the cell membrane. Its function is as follows. Putative potassium transporter. The polypeptide is Potassium transporter 9 (POT9) (Arabidopsis thaliana (Mouse-ear cress)).